Reading from the N-terminus, the 399-residue chain is MALISRSCGAASRYSSSHLFLPSKGAEAANVYCNRLSTAASTSSSSSPSPSTHNDRKKDLREDGLNLQDFISGELSEKSKWEEYRGNLKREKGERLRLPPWLKTEIPIGKNYNKLKNTLRELNLHTVCEEARCPNIGECWGGGEYATATATIMLMGDTCTRGCRFCSVKTARRPPPLDPDEPYNTAKAIAAWGLDYVVLTSVDRDDIPDGGAEHFAKTVSNIKERNSKILVECLTPDFRGDLAAVEKIALSGLDVYAHNVETVRELQRHVRDPRANFDQSLSVLRHAKKVKSSVLTKTSIMLGLGETDAQIQATLTELRDSGVDCLTLGQYMQPTKRHLKVEEYVTPEKFAFWEKVGQEMGFIYTASGPLVRSSYKAGEFFLKNLLEKRKTEETTATAE.

The N-terminal 14 residues, 1 to 14 (MALISRSCGAASRY), are a transit peptide targeting the mitochondrion. Residues 39-52 (AASTSSSSSPSPST) are compositionally biased toward low complexity. The interval 39–60 (AASTSSSSSPSPSTHNDRKKDL) is disordered. Residues Cys128, Cys133, Cys139, Cys159, Cys163, Cys166, and Ser374 each contribute to the [4Fe-4S] cluster site. The 220-residue stretch at 144-363 (EYATATATIM…EKVGQEMGFI (220 aa)) folds into the Radical SAM core domain.

The protein belongs to the radical SAM superfamily. Lipoyl synthase family. [4Fe-4S] cluster serves as cofactor.

The protein localises to the mitochondrion. It carries out the reaction [[Fe-S] cluster scaffold protein carrying a second [4Fe-4S](2+) cluster] + N(6)-octanoyl-L-lysyl-[protein] + 2 oxidized [2Fe-2S]-[ferredoxin] + 2 S-adenosyl-L-methionine + 4 H(+) = [[Fe-S] cluster scaffold protein] + N(6)-[(R)-dihydrolipoyl]-L-lysyl-[protein] + 4 Fe(3+) + 2 hydrogen sulfide + 2 5'-deoxyadenosine + 2 L-methionine + 2 reduced [2Fe-2S]-[ferredoxin]. The protein operates within protein modification; protein lipoylation via endogenous pathway; protein N(6)-(lipoyl)lysine from octanoyl-[acyl-carrier-protein]: step 2/2. Its function is as follows. Catalyzes the radical-mediated insertion of two sulfur atoms into the C-6 and C-8 positions of the octanoyl moiety bound to the lipoyl domains of lipoate-dependent enzymes, thereby converting the octanoylated domains into lipoylated derivatives. This Danio rerio (Zebrafish) protein is Lipoyl synthase, mitochondrial (lias).